The following is a 347-amino-acid chain: Transcription factor JunD (347 aa).

The tract at residues 1 to 43 (METPFYGDEALSGLGGGASGSGGSFASPGRLFPGAPPTAAAGS) is disordered. Gly residues predominate over residues 13 to 23 (GLGGGASGSGG). The Menin-binding motif (MBM) signature appears at 27–39 (SPGRLFPGAPPTA). An MAP kinase docking motif; essential for its phosphorylation motif is present at residues 46-55 (KKDALTLSLS). The tract at residues 62–86 (LKPAAAPPPTPLRADGAPSAAPPDG) is disordered. Positions 73–86 (LRADGAPSAAPPDG) are enriched in low complexity. Residue serine 90 is modified to Phosphoserine. A Phosphoserine; by MAPK8 modification is found at serine 100. Threonine 117 carries the phosphothreonine modification. The tract at residues 244 to 264 (QTVPDVPSFGESPPLSPIDMD) is disordered. 3 positions are modified to phosphoserine: serine 251, serine 255, and serine 259. Residues 268-295 (RIKAERKRLRNRIAASKCRKRKLERISR) are basic motif. A bZIP domain is found at 268–331 (RIKAERKRLR…AQLKQKVLSH (64 aa)). The interval 296-324 (LEEKVKTLKSQNTELASTASLLREQVAQL) is leucine-zipper.

The protein belongs to the bZIP family. Jun subfamily. In terms of assembly, heterodimer; binds DNA as a heterodimer. Component of an AP-1 transcription factor complex composed of JUN-FOS heterodimers. As part of the AP-1 transcription factor complex, forms heterodimers with FOS proteins, thereby binding to the AP-1 consensus sequence and stimulating transcription. Forms heterodimers with FOSB; thereby binding to the AP-1 consensus sequence. Interacts (via MBM motif) with MEN1; this interaction represses transcriptional activation. Interacts with MAPK10; this interaction is inhibited in the presence of MEN1. Post-translationally, phosphorylated by MAP kinases MAPK8 and MAPK10; phosphorylation is inhibited in the presence of MEN1.

The protein localises to the nucleus. Functionally, transcription factor binding AP-1 sites. Heterodimerizes with proteins of the FOS family to form an AP-1 transcription factor complex, thereby enhancing their DNA binding activity to an AP-1 consensus sequence 3'-TGA[GC]TCA-5' and enhancing their transcriptional activity. This Homo sapiens (Human) protein is Transcription factor JunD (JUND).